Consider the following 261-residue polypeptide: Calbindin (261 aa).

Ala-2 is modified (N-acetylalanine). Residues 2-7 form an interaction with RANBP9 region; that stretch reads AESHLQ. EF-hand domains lie at 11 to 46, 53 to 88, 98 to 133, 142 to 177, and 186 to 221; these read ITASQFFEIWLHFDADGSGYLEGKELQNLIQELQQA, ELSPEMKTFVDQYGQRDDGKIGIVELAHVLPTEENF, KSCEEFMKTWRKYDTDHGGFIETEELKNFLKDLLEK, KLAEYTDLMLKLFDSNNDGKLELTEMARLLPVQENF, and MCGKEFNKAFELYDQDGNGYIDENELDALLKDLCEK. Ca(2+) is bound by residues Asp-24, Asp-26, Ser-28, Tyr-30, and Glu-35. Ca(2+)-binding residues include Asp-111, Asp-113, Glu-122, Asp-155, Asn-157, Asp-159, Lys-161, Glu-166, Asp-199, Asp-201, Asn-203, Tyr-205, and Glu-210.

Belongs to the calbindin family. In terms of assembly, interacts with RANBP9.

Buffers cytosolic calcium. May stimulate a membrane Ca(2+)-ATPase and a 3',5'-cyclic nucleotide phosphodiesterase. The chain is Calbindin (CALB1) from Pongo abelii (Sumatran orangutan).